The chain runs to 271 residues: Co-chaperone protein DjlA (271 aa).

Over 1–6 (MQYWGK) the chain is Periplasmic. The chain crosses the membrane as a helical span at residues 7-31 (IIGVAVALLMGGGFWGVVLGLLIGH). At 32–271 (MFDKARSRKM…ELIKQQKGFK (240 aa)) the chain is on the cytoplasmic side. In terms of domain architecture, J spans 205-271 (DACNVLGVKP…ELIKQQKGFK (67 aa)).

Homodimer.

It is found in the cell inner membrane. Its function is as follows. Regulatory DnaK co-chaperone. Direct interaction between DnaK and DjlA is needed for the induction of the wcaABCDE operon, involved in the synthesis of a colanic acid polysaccharide capsule, possibly through activation of the RcsB/RcsC phosphotransfer signaling pathway. The colanic acid capsule may help the bacterium survive conditions outside the host. The protein is Co-chaperone protein DjlA of Escherichia coli O157:H7.